The primary structure comprises 587 residues: 5-aminolevulinate synthase, erythroid-specific, mitochondrial (587 aa).

Residues 1 to 49 (MVTAAMLLQCCPVLARGPTSLLGKVVKTHQFLFGIGRCPILATQGPNCS) constitute a mitochondrion transit peptide. A succinyl-CoA-binding site is contributed by Arg-163. Residues Cys-258 and Phe-259 each coordinate pyridoxal 5'-phosphate. The succinyl-CoA site is built by Ser-280 and Lys-299. Residues Ser-332, His-360, and Thr-388 each contribute to the pyridoxal 5'-phosphate site. Lys-391 is an active-site residue. Lys-391 is subject to N6-(pyridoxal phosphate)lysine. Pyridoxal 5'-phosphate contacts are provided by Thr-420 and Thr-421. Position 508 (Thr-508) interacts with succinyl-CoA.

The protein belongs to the class-II pyridoxal-phosphate-dependent aminotransferase family. As to quaternary structure, homodimer. Interacts with SUCLA2. Interacts with SUCLA2. Pyridoxal 5'-phosphate serves as cofactor. In terms of tissue distribution, erythroid-specific.

The protein resides in the mitochondrion inner membrane. The catalysed reaction is succinyl-CoA + glycine + H(+) = 5-aminolevulinate + CO2 + CoA. It functions in the pathway porphyrin-containing compound metabolism; protoporphyrin-IX biosynthesis; 5-aminolevulinate from glycine: step 1/1. With respect to regulation, down-regulated by itaconyl-CoA which acts as a competitive inhibitor of succinyl-CoA substrate. Functionally, catalyzes the pyridoxal 5'-phosphate (PLP)-dependent condensation of succinyl-CoA and glycine to form aminolevulinic acid (ALA), with CoA and CO2 as by-products. Contributes significantly to heme formation during erythropoiesis. In terms of biological role, catalyzes the pyridoxal 5'-phosphate (PLP)-dependent condensation of succinyl-CoA and glycine to form aminolevulinic acid (ALA), with CoA and CO2 as by-products. Catalytic activity is 75-85% of isoform 1 activity. Its function is as follows. Catalyzes the pyridoxal 5'-phosphate (PLP)-dependent condensation of succinyl-CoA and glycine to form aminolevulinic acid (ALA), with CoA and CO2 as by-products. Catalytic activity is 65-75% of isoform 1 activity. This chain is 5-aminolevulinate synthase, erythroid-specific, mitochondrial, found in Homo sapiens (Human).